We begin with the raw amino-acid sequence, 108 residues long: UPF0060 membrane protein RHOS4_03690 (108 aa).

The next 4 membrane-spanning stretches (helical) occupy residues Leu5 to Trp25, Ala32 to Thr52, Ala62 to Val82, and Arg86 to Pro106.

Belongs to the UPF0060 family.

It localises to the cell inner membrane. This is UPF0060 membrane protein RHOS4_03690 from Cereibacter sphaeroides (strain ATCC 17023 / DSM 158 / JCM 6121 / CCUG 31486 / LMG 2827 / NBRC 12203 / NCIMB 8253 / ATH 2.4.1.) (Rhodobacter sphaeroides).